Consider the following 1114-residue polypeptide: Isoleucine--tRNA ligase (1114 aa).

The 'HIGH' region signature appears at 61 to 71 (PTANGQPGTHH). Residues 640–644 (KMSKH) carry the 'KMSKS' region motif. An ATP-binding site is contributed by lysine 643.

This sequence belongs to the class-I aminoacyl-tRNA synthetase family. IleS type 2 subfamily. In terms of assembly, monomer. The cofactor is Zn(2+).

The protein localises to the cytoplasm. It carries out the reaction tRNA(Ile) + L-isoleucine + ATP = L-isoleucyl-tRNA(Ile) + AMP + diphosphate. In terms of biological role, catalyzes the attachment of isoleucine to tRNA(Ile). As IleRS can inadvertently accommodate and process structurally similar amino acids such as valine, to avoid such errors it has two additional distinct tRNA(Ile)-dependent editing activities. One activity is designated as 'pretransfer' editing and involves the hydrolysis of activated Val-AMP. The other activity is designated 'posttransfer' editing and involves deacylation of mischarged Val-tRNA(Ile). This is Isoleucine--tRNA ligase from Cutibacterium acnes (strain DSM 16379 / KPA171202) (Propionibacterium acnes).